Reading from the N-terminus, the 878-residue chain is Splicing factor 3B subunit 2 (878 aa).

Positions 1–10 (MAAEHPEPPK) are enriched in basic and acidic residues. 2 disordered regions span residues 1–25 (MAAE…GHYG) and 67–136 (RPVL…LRVG). A Glycyl lysine isopeptide (Lys-Gly) (interchain with G-Cter in SUMO2) cross-link involves residue Lys10. The SAP domain maps to 24–58 (YGAWAAQELQARLAEIGAPIQGSREELVERLQTYT). Pro residues-rich tracts occupy residues 91–114 (PMPP…PPPG) and 122–133 (AHPPNLGPPPPL). Residues 140-177 (ALSEEERLKLAQQQAALLMQQEERAKQAAVLMEQERQQ) adopt a coiled-coil conformation. Disordered stretches follow at residues 183-356 (GTAV…EYVT) and 383-436 (KKEK…SKKK). Positions 201 to 221 (PLGPRVAAPVGPVVPTPTVLP) are enriched in low complexity. Residues Arg205, Arg228, and Arg230 each carry the omega-N-methylarginine modification. Over residues 224–237 (APVPRPRGPPPPPG) the composition is skewed to pro residues. Lys258 carries the post-translational modification N6-acetyllysine. Over residues 260–269 (LQLKESRQEE) the composition is skewed to basic and acidic residues. Residue Lys263 forms a Glycyl lysine isopeptide (Lys-Gly) (interchain with G-Cter in SUMO2) linkage. Ser272 is subject to Phosphoserine. A Phosphothreonine modification is found at Thr281. Phosphoserine is present on residues Ser290 and Ser292. Thr294 is subject to Phosphothreonine. Position 300 is a phosphoserine (Ser300). The span at 305–321 (EKNRKRRNRKKKKKPQR) shows a compositional bias: basic residues. Positions 330-342 (SGDREKDSGRSRG) are enriched in basic and acidic residues. Ser343 carries the post-translational modification Phosphoserine. Residues Lys383 and Lys395 each participate in a glycyl lysine isopeptide (Lys-Gly) (interchain with G-Cter in SUMO2) cross-link. Composition is skewed to basic and acidic residues over residues 383 to 397 (KKEK…DKME) and 405 to 414 (KGFEEEHKDS). Residues 384-533 (KEKEKEPEKL…QEKEEQKTMK (150 aa)) are required for interaction with PRMT9. 3 positions are modified to phosphoserine: Ser414, Ser418, and Ser419. Residue Lys475 forms a Glycyl lysine isopeptide (Lys-Gly) (interchain with G-Cter in SUMO2) linkage. 2 positions are modified to omega-N-methylarginine: Arg491 and Arg498. Arg491 carries the post-translational modification Symmetric dimethylarginine. A Glycyl lysine isopeptide (Lys-Gly) (interchain with G-Cter in SUMO2) cross-link involves residue Lys526. The interval 674–740 (AAEFQTKTEE…PGGFSSVPAG (67 aa)) is disordered. Acidic residues predominate over residues 695–715 (EPSDEESSEEEEEEESDEDKP). A Glycyl lysine isopeptide (Lys-Gly) (interchain with G-Cter in SUMO2) cross-link involves residue Lys753. Thr763 bears the Phosphothreonine mark. Residues Lys773, Lys826, and Lys840 each participate in a glycyl lysine isopeptide (Lys-Gly) (interchain with G-Cter in SUMO2) cross-link. Residues 827–852 (YEEHVREQQAQVEKEDFSDMVAEHAA) show a composition bias toward basic and acidic residues. Residues 827–878 (YEEHVREQQAQVEKEDFSDMVAEHAAKQKQKKRKAQPQDSRGGSKKYKEFKF) are disordered. Ser844 is subject to Phosphoserine.

As to quaternary structure, component of the 17S U2 SnRNP complex, a ribonucleoprotein complex that contains small nuclear RNA (snRNA) U2 and a number of specific proteins. Part of the SF3B subcomplex of the 17S U2 SnRNP complex. SF3B associates with the splicing subcomplex SF3A and a 12S RNA unit to form the U2 small nuclear ribonucleoproteins complex (U2 snRNP). Within the SF3B complex, interacts directly with SF3B4. Found in a complex with PRMT9, SF3B2 and SF3B4. Interacts (Arg-491-methylated form) with SMN1 (via Tudor domain). Interacts with RBM7. Interacts with ERCC6. Component of the minor spliceosome. Within this complex, interacts with SCNM1 and CRIPT. In terms of processing, methylation at Arg-491 by PRMT9 is required for the interaction with SMN1.

Its subcellular location is the nucleus. The protein resides in the nucleus speckle. In terms of biological role, component of the 17S U2 SnRNP complex of the spliceosome, a large ribonucleoprotein complex that removes introns from transcribed pre-mRNAs. The 17S U2 SnRNP complex (1) directly participates in early spliceosome assembly and (2) mediates recognition of the intron branch site during pre-mRNA splicing by promoting the selection of the pre-mRNA branch-site adenosine, the nucleophile for the first step of splicing. Within the 17S U2 SnRNP complex, SF3B2 is part of the SF3B subcomplex, which is required for 'A' complex assembly formed by the stable binding of U2 snRNP to the branchpoint sequence in pre-mRNA. Sequence independent binding of SF3A and SF3B subcomplexes upstream of the branch site is essential, it may anchor U2 snRNP to the pre-mRNA. May also be involved in the assembly of the 'E' complex. Also acts as a component of the minor spliceosome, which is involved in the splicing of U12-type introns in pre-mRNAs. This chain is Splicing factor 3B subunit 2, found in Mus musculus (Mouse).